A 118-amino-acid polypeptide reads, in one-letter code: DNA-directed RNA polymerase subunit omega (118 aa).

The protein belongs to the RNA polymerase subunit omega family. In terms of assembly, the RNAP catalytic core consists of 2 alpha, 1 beta, 1 beta' and 1 omega subunit. When a sigma factor is associated with the core the holoenzyme is formed, which can initiate transcription.

It carries out the reaction RNA(n) + a ribonucleoside 5'-triphosphate = RNA(n+1) + diphosphate. Functionally, promotes RNA polymerase assembly. Latches the N- and C-terminal regions of the beta' subunit thereby facilitating its interaction with the beta and alpha subunits. The sequence is that of DNA-directed RNA polymerase subunit omega from Paracoccus denitrificans (strain Pd 1222).